A 232-amino-acid polypeptide reads, in one-letter code: 5'-methylthioadenosine/S-adenosylhomocysteine nucleosidase (232 aa).

The Proton acceptor role is filled by E12. Substrate is bound by residues G78, M153, and 174 to 175 (ME). The active-site Proton donor is the D198.

This sequence belongs to the PNP/UDP phosphorylase family. MtnN subfamily.

It catalyses the reaction S-adenosyl-L-homocysteine + H2O = S-(5-deoxy-D-ribos-5-yl)-L-homocysteine + adenine. The catalysed reaction is S-methyl-5'-thioadenosine + H2O = 5-(methylsulfanyl)-D-ribose + adenine. The enzyme catalyses 5'-deoxyadenosine + H2O = 5-deoxy-D-ribose + adenine. Its pathway is amino-acid biosynthesis; L-methionine biosynthesis via salvage pathway; S-methyl-5-thio-alpha-D-ribose 1-phosphate from S-methyl-5'-thioadenosine (hydrolase route): step 1/2. In terms of biological role, catalyzes the irreversible cleavage of the glycosidic bond in both 5'-methylthioadenosine (MTA) and S-adenosylhomocysteine (SAH/AdoHcy) to adenine and the corresponding thioribose, 5'-methylthioribose and S-ribosylhomocysteine, respectively. Also cleaves 5'-deoxyadenosine, a toxic by-product of radical S-adenosylmethionine (SAM) enzymes, into 5-deoxyribose and adenine. The sequence is that of 5'-methylthioadenosine/S-adenosylhomocysteine nucleosidase from Hydrogenovibrio crunogenus (strain DSM 25203 / XCL-2) (Thiomicrospira crunogena).